Reading from the N-terminus, the 251-residue chain is tRNA (guanine-N(7)-)-methyltransferase (251 aa).

Positions 69, 94, 121, and 143 each coordinate S-adenosyl-L-methionine. D143 is an active-site residue. Residues K147 and D179 each coordinate substrate.

It belongs to the class I-like SAM-binding methyltransferase superfamily. TrmB family.

The enzyme catalyses guanosine(46) in tRNA + S-adenosyl-L-methionine = N(7)-methylguanosine(46) in tRNA + S-adenosyl-L-homocysteine. It functions in the pathway tRNA modification; N(7)-methylguanine-tRNA biosynthesis. In terms of biological role, catalyzes the formation of N(7)-methylguanine at position 46 (m7G46) in tRNA. The protein is tRNA (guanine-N(7)-)-methyltransferase of Rhodopseudomonas palustris (strain BisB18).